The sequence spans 296 residues: Ribonuclease H2 subunit A (296 aa).

Residues 14–236 (PCLMGIDEAG…CTTHLKGEVE (223 aa)) form the RNase H type-2 domain. Residues D20, E21, and D127 each contribute to the a divalent metal cation site.

This sequence belongs to the RNase HII family. Eukaryotic subfamily. The cofactor is Mn(2+). Requires Mg(2+) as cofactor.

The enzyme catalyses Endonucleolytic cleavage to 5'-phosphomonoester.. Its function is as follows. Catalytic subunit of RNase HII, an endonuclease that specifically degrades the RNA of RNA:DNA hybrids. Participates in DNA replication, possibly by mediating the removal of lagging-strand Okazaki fragment RNA primers during DNA replication. Mediates the excision of single ribonucleotides from DNA:RNA duplexes. The polypeptide is Ribonuclease H2 subunit A (Arabidopsis thaliana (Mouse-ear cress)).